Consider the following 338-residue polypeptide: Phenylalanine--tRNA ligase alpha subunit (338 aa).

Glu-252 provides a ligand contact to Mg(2+).

This sequence belongs to the class-II aminoacyl-tRNA synthetase family. Phe-tRNA synthetase alpha subunit type 1 subfamily. Tetramer of two alpha and two beta subunits. Mg(2+) is required as a cofactor.

It localises to the cytoplasm. It carries out the reaction tRNA(Phe) + L-phenylalanine + ATP = L-phenylalanyl-tRNA(Phe) + AMP + diphosphate + H(+). In Pseudomonas paraeruginosa (strain DSM 24068 / PA7) (Pseudomonas aeruginosa (strain PA7)), this protein is Phenylalanine--tRNA ligase alpha subunit.